Consider the following 107-residue polypeptide: Benzene 1,2-dioxygenase system ferredoxin subunit (107 aa).

The Rieske domain maps to 4 to 99 (TYILRQSDLP…IKVEGDEVHV (96 aa)). Positions 43, 45, 62, and 65 each coordinate [2Fe-2S] cluster.

Belongs to the bacterial ring-hydroxylating dioxygenase ferredoxin component family. In terms of assembly, this dioxygenase system consists of four proteins: the two subunits of the hydroxylase component (BnzA and BnzB), a ferredoxin (BnzC) and a ferredoxin reductase (BnzD).

It participates in aromatic compound metabolism; benzene degradation; catechol from benzene: step 1/2. In terms of biological role, this protein seems to be a 2Fe-2S ferredoxin. This chain is Benzene 1,2-dioxygenase system ferredoxin subunit (bnzC), found in Pseudomonas putida (Arthrobacter siderocapsulatus).